The following is a 3411-amino-acid chain: Genome polyprotein (3411 aa).

Over 1 to 104 (MSGRKAQGKT…LSSRKRRSHD (104 aa)) the chain is Cytoplasmic. The hydrophobic; homodimerization of capsid protein C stretch occupies residues 38–72 (PGPSRGVQGFISFFSFNILTGKKITAHLKRLWKML). The propeptide at 102-121 (SHDVLTVQFLILGMLLMAGG) is ER anchor for the capsid protein C, removed in mature form by serine protease NS3. Residues 105–125 (VLTVQFLILGMLLMAGGVTLV) form a helical membrane-spanning segment. The Extracellular portion of the chain corresponds to 126–244 (RKNRWLLLNV…GERQLQKIER (119 aa)). N-linked (GlcNAc...) asparagine; by host glycans are attached at residues Asn-134 and Asn-150. Residues 245–265 (WLVRNPFFAVTALAIAYLVGS) traverse the membrane as a helical segment. Topologically, residues 266 to 270 (NMTQR) are cytoplasmic. A helical membrane pass occupies residues 271 to 285 (VVIALLVLAVGPAYS). Topologically, residues 286–730 (AHCIGITDRD…TVFGSAFQGL (445 aa)) are extracellular. Intrachain disulfides connect Cys-288–Cys-315, Cys-345–Cys-401, Cys-345–Cys-406, Cys-359–Cys-390, Cys-377–Cys-401, Cys-377–Cys-406, Cys-467–Cys-568, and Cys-585–Cys-615. The interval 383–396 (DRGWGNGCGLFGKG) is fusion peptide. A helical transmembrane segment spans residues 731 to 751 (FGGLSWITKVIMGAVLIWVGI). Topologically, residues 752–757 (NTRNMT) are extracellular. A helical transmembrane segment spans residues 758-778 (MSMSMILVGVIMMFLSLGVGA). The Extracellular segment spans residues 779 to 1132 (DQGCAINFGK…LVRSWVTAGE (354 aa)). Intrachain disulfides connect Cys-782/Cys-793, Cys-833/Cys-921, Cys-957/Cys-1002, Cys-1058/Cys-1107, Cys-1069/Cys-1091, and Cys-1090/Cys-1094. N-linked (GlcNAc...) asparagine; by host glycans are attached at residues Asn-908 and Asn-986. Residues 1133–1153 (IHAVPFGLVSMMIAMEVVLRK) traverse the membrane as a helical segment. Over 1154–1201 (RQGPKQMLVGGMVLLGAMLVGQVTLLDLLKLTMAVGLHFHEMNNGGDA) the chain is Cytoplasmic. A helical transmembrane segment spans residues 1202 to 1222 (MYMALIAAFSIRPGLLIGFGL). Residues 1223–1287 (RTLWSPRERL…ILPLMALLTP (65 aa)) are Lumenal-facing. A helical membrane pass occupies residues 1288–1308 (VTMAEVRLATMLLCAVVIIGV). The Cytoplasmic segment spans residues 1309–1355 (LHQNSKDTSMQKTIPLVALTLTSYLGLTQPFLGLCAFLATRIFGRRS). The chain crosses the membrane as a helical span at residues 1356–1376 (IPVNEALAAAGLVGVLAGLAF). Residues 1377–1378 (QE) are Lumenal-facing. Residues 1379–1399 (MENFLGPIAVGGILMMLVSVA) traverse the membrane as a helical segment. Residues 1400–1456 (GRVDGLELKKLGEVSWEEEAEISGSSARYDVALSEQGEFKLLSEEKVPWDQVVMTSL) lie on the Cytoplasmic side of the membrane. The interval 1407–1446 (LKKLGEVSWEEEAEISGSSARYDVALSEQGEFKLLSEEKV) is interacts with and activates NS3 protease. The helical intramembrane region spans 1457-1477 (ALVGAAIHPSALLLVLAGWLF). The Cytoplasmic portion of the chain corresponds to 1478–2157 (HVKGARRSGD…RNALSMMPEA (680 aa)). Positions 1485–1665 (SGDVLWDIPT…EVKEEGKEEL (181 aa)) constitute a Peptidase S7 domain. Active-site charge relay system; for serine protease NS3 activity residues include His-1537, Asp-1561, and Ser-1622. The 157-residue stretch at 1669–1825 (PTMLKKGMTT…HSNGEIEDVQ (157 aa)) folds into the Helicase ATP-binding domain. The segment at 1673–1676 (KKGM) is important for RNA-binding. ATP is bound at residue 1682–1689 (YHPGAGKT). The DEAH box motif lies at 1773–1776 (DEAH). The region spanning 1820–1997 (EIEDVQTDIP…VRGGMVAPLY (178 aa)) is the Helicase C-terminal domain. Lys-1877 is subject to N6-acetyllysine; by host. The chain crosses the membrane as a helical span at residues 2158-2178 (MTIVMLFILAGLLTSGMVIFF). At 2179-2186 (MSPKGISR) the chain is on the lumenal side. Positions 2187-2207 (MSMAMGTMAGCGYLMFLGGAK) form an intramembrane region, helical. Residues 2208-2209 (PT) are Lumenal-facing. The chain crosses the membrane as a helical span at residues 2210-2230 (HISYIMLIFFVLMVVVIPEPG). The Cytoplasmic portion of the chain corresponds to 2231 to 2241 (QQRSIQDNQVA). Residues 2242-2262 (YLIIGILTLVSVVAANELGML) form a helical membrane-spanning segment. Topologically, residues 2263–2293 (ERTKEDLFGKKNLIPSSASPWSWPDLDLKPG) are lumenal. The helical intramembrane region spans 2294–2314 (AAWTVYVGIVTILSPMLHHWI). Residues 2315 to 2360 (KVEYGNLSLSGIAQSASVLSFMDKGIPFMKMNISVIILLVSGWNSI) lie on the Lumenal side of the membrane. The chain crosses the membrane as a helical span at residues 2361–2380 (TVMPLLCGIGCAMLHWTLIL). At 2381-2421 (PGIKAQQSKLPQRRVFHGVAKNPVVDGNPTVDIEEAPEMPA) the chain is on the cytoplasmic side. A helical membrane pass occupies residues 2422–2442 (LYEKKLALYLLLALSLASVAM). Over 2443–2445 (CRT) the chain is Lumenal. The chain crosses the membrane as a helical span at residues 2446 to 2466 (PFSLAEGIVLASAALGPLIEG). Residues 2467-3411 (NTSLLWNGPM…DADLQPGELI (945 aa)) lie on the Cytoplasmic side of the membrane. The mRNA cap 0-1 NS5-type MT domain maps to 2507–2771 (GRANGKTLGE…DVILPIGTRS (265 aa)). Residue Ser-2562 coordinates S-adenosyl-L-methionine. Position 2562 is a phosphoserine (Ser-2562). Lys-2567 functions as the For 2'-O-MTase activity in the catalytic mechanism. Positions 2592, 2593, 2610, 2611, 2637, and 2638 each coordinate S-adenosyl-L-methionine. Residue Asp-2652 is the For 2'-O-MTase activity of the active site. S-adenosyl-L-methionine is bound at residue Ile-2653. Catalysis depends on for 2'-O-MTase activity residues Lys-2688 and Glu-2724. Tyr-2726 lines the S-adenosyl-L-methionine pocket. Positions 2878 to 2911 (RKIMKVVNRWLFRHLAREKNPRLCTKEEFIAKVR) match the Nuclear localization signal motif. 4 residues coordinate Zn(2+): Glu-2945, His-2949, Cys-2954, and Cys-2957. The region spanning 3035–3187 (GGFYADDTAG…RPIDDRFGMA (153 aa)) is the RdRp catalytic domain. 3 residues coordinate Zn(2+): His-3222, Cys-3238, and Cys-3357.

It in the N-terminal section; belongs to the class I-like SAM-binding methyltransferase superfamily. mRNA cap 0-1 NS5-type methyltransferase family. In terms of assembly, homodimer. Interacts (via N-terminus) with host EXOC1 (via C-terminus); this interaction results in EXOC1 degradation through the proteasome degradation pathway. As to quaternary structure, forms heterodimers with envelope protein E in the endoplasmic reticulum and Golgi. Homodimer; in the endoplasmic reticulum and Golgi. Interacts with protein prM. Interacts with non-structural protein 1. In terms of assembly, homodimer; Homohexamer when secreted. Interacts with envelope protein E. As to quaternary structure, interacts (via N-terminus) with serine protease NS3. Forms a heterodimer with serine protease NS3. May form homooligomers. In terms of assembly, forms a heterodimer with NS2B. Interacts with non-structural protein 2A (via N-terminus). Interacts with NS4B. Interacts with unphosphorylated RNA-directed RNA polymerase NS5; this interaction stimulates RNA-directed RNA polymerase NS5 guanylyltransferase activity. NS3 interacts with host PDCD6IP; this interaction contributes to virion release. As to quaternary structure, interacts with serine protease NS3. Homodimer. Interacts with host STAT2; this interaction prevents the establishment of cellular antiviral state. Interacts with serine protease NS3. Interacts with host TRIM23; this interaction leads to NS5 ubiquitination. Specific enzymatic cleavages in vivo yield mature proteins. The nascent capsid protein C contains a C-terminal hydrophobic domain that act as a signal sequence for translocation of prM into the lumen of the ER. Mature capsid protein C is cleaved at a site upstream of this hydrophobic domain by NS3. prM is cleaved in post-Golgi vesicles by a host furin, releasing the mature small envelope protein M, and peptide pr. Non-structural protein 2A-alpha, a C-terminally truncated form of non-structural protein 2A, results from partial cleavage by NS3. Specific enzymatic cleavages in vivo yield mature proteins peptide 2K acts as a signal sequence and is removed from the N-terminus of NS4B by the host signal peptidase in the ER lumen. Signal cleavage at the 2K-4B site requires a prior NS3 protease-mediated cleavage at the 4A-2K site. Post-translationally, cleaved in post-Golgi vesicles by a host furin, releasing the mature small envelope protein M, and peptide pr. This cleavage is incomplete as up to 30% of viral particles still carry uncleaved prM. In terms of processing, N-glycosylated. N-glycosylated. The excreted form is glycosylated and this is required for efficient secretion of the protein from infected cells. Post-translationally, polyubiquitinated; ubiquitination is probably mediated by host TRIM23 and is prerequisite for NS5-STAT2 interaction. NS5 is not ISGylated or sumoylated. In terms of processing, acetylated by host KAT5. Acetylation modulates NS3 RNA-binding and unwinding activities and plays an important positive role for viral replication. Phosphorylated on serines residues. This phosphorylation may trigger NS5 nuclear localization.

It is found in the virion. The protein resides in the host nucleus. It localises to the host cytoplasm. Its subcellular location is the host perinuclear region. The protein localises to the secreted. It is found in the virion membrane. The protein resides in the host endoplasmic reticulum membrane. The catalysed reaction is Selective hydrolysis of -Xaa-Xaa-|-Yaa- bonds in which each of the Xaa can be either Arg or Lys and Yaa can be either Ser or Ala.. The enzyme catalyses RNA(n) + a ribonucleoside 5'-triphosphate = RNA(n+1) + diphosphate. It carries out the reaction a ribonucleoside 5'-triphosphate + H2O = a ribonucleoside 5'-diphosphate + phosphate + H(+). It catalyses the reaction ATP + H2O = ADP + phosphate + H(+). The catalysed reaction is a 5'-end (5'-triphosphoguanosine)-ribonucleoside in mRNA + S-adenosyl-L-methionine = a 5'-end (N(7)-methyl 5'-triphosphoguanosine)-ribonucleoside in mRNA + S-adenosyl-L-homocysteine. The enzyme catalyses a 5'-end (N(7)-methyl 5'-triphosphoguanosine)-ribonucleoside in mRNA + S-adenosyl-L-methionine = a 5'-end (N(7)-methyl 5'-triphosphoguanosine)-(2'-O-methyl-ribonucleoside) in mRNA + S-adenosyl-L-homocysteine + H(+). Functionally, plays a role in virus budding by binding to the cell membrane and gathering the viral RNA into a nucleocapsid that forms the core of a mature virus particle. During virus entry, may induce genome penetration into the host cytoplasm after hemifusion induced by the surface proteins. Can migrate to the cell nucleus where it modulates host functions. In terms of biological role, inhibits RNA silencing by interfering with host Dicer. Prevents premature fusion activity of envelope proteins in trans-Golgi by binding to envelope protein E at pH6.0. After virion release in extracellular space, gets dissociated from E dimers. Its function is as follows. Acts as a chaperone for envelope protein E during intracellular virion assembly by masking and inactivating envelope protein E fusion peptide. prM is the only viral peptide matured by host furin in the trans-Golgi network probably to avoid catastrophic activation of the viral fusion activity in acidic Golgi compartment prior to virion release. prM-E cleavage is inefficient, and many virions are only partially matured. These uncleaved prM would play a role in immune evasion. Functionally, may play a role in virus budding. Exerts cytotoxic effects by activating a mitochondrial apoptotic pathway through M ectodomain. May display a viroporin activity. In terms of biological role, binds to host cell surface receptor and mediates fusion between viral and cellular membranes. Envelope protein is synthesized in the endoplasmic reticulum in the form of heterodimer with protein prM. They play a role in virion budding in the ER, and the newly formed immature particle is covered with 60 spikes composed of heterodimer between precursor prM and envelope protein E. The virion is transported to the Golgi apparatus where the low pH causes dissociation of PrM-E heterodimers and formation of E homodimers. prM-E cleavage is inefficient, and many virions are only partially matured. These uncleaved prM would play a role in immune evasion. Involved in immune evasion, pathogenesis and viral replication. Once cleaved off the polyprotein, is targeted to three destinations: the viral replication cycle, the plasma membrane and the extracellular compartment. Essential for viral replication. Required for formation of the replication complex and recruitment of other non-structural proteins to the ER-derived membrane structures. Excreted as a hexameric lipoparticle that plays a role against host immune response. Antagonizing the complement function. Binds to the host macrophages and dendritic cells. Inhibits signal transduction originating from Toll-like receptor 3 (TLR3). Its function is as follows. Component of the viral RNA replication complex that functions in virion assembly and antagonizes the host immune response. Functionally, required cofactor for the serine protease function of NS3. May have membrane-destabilizing activity and form viroporins. In terms of biological role, displays three enzymatic activities: serine protease, NTPase and RNA helicase. NS3 serine protease, in association with NS2B, performs its autocleavage and cleaves the polyprotein at dibasic sites in the cytoplasm: C-prM, NS2A-NS2B, NS2B-NS3, NS3-NS4A, NS4A-2K and NS4B-NS5. NS3 RNA helicase binds RNA and unwinds dsRNA in the 3' to 5' direction. Also plays a role in virus assembly. Regulates the ATPase activity of the NS3 helicase activity. NS4A allows NS3 helicase to conserve energy during unwinding. Its function is as follows. Functions as a signal peptide for NS4B and is required for the interferon antagonism activity of the latter. Functionally, induces the formation of ER-derived membrane vesicles where the viral replication takes place. Inhibits interferon (IFN)-induced host STAT1 phosphorylation and nuclear translocation, thereby preventing the establishment of cellular antiviral state by blocking the IFN-alpha/beta pathway. In terms of biological role, replicates the viral (+) and (-) RNA genome, and performs the capping of genomes in the cytoplasm. NS5 methylates viral RNA cap at guanine N-7 and ribose 2'-O positions. Besides its role in RNA genome replication, also prevents the establishment of cellular antiviral state by blocking the interferon-alpha/beta (IFN-alpha/beta) signaling pathway. IFN-I induces binding of NS5 to host IFN-activated transcription factor STAT2, preventing its transcriptional activity. Host TRIM23 is the E3 ligase that interacts with and polyubiquitinates NS5 to promote its binding to STAT2 and trigger IFN-I signaling inhibition. This is Genome polyprotein from Yellow fever virus (isolate Ivory Coast/85-82H/1982) (YFV).